Consider the following 749-residue polypeptide: Putative Xaa-Pro aminopeptidase FRA1 (749 aa).

Positions 1–33 are disordered; that stretch reads MTSKPSTSDGRAHSISHVPGTHMRGTSASHSPR. A phosphoserine mark is found at serine 69, serine 92, and serine 95. Aspartate 551, aspartate 562, glutamate 660, and glutamate 674 together coordinate Mn(2+).

Belongs to the peptidase M24B family. As to quaternary structure, homodimer. Interacts with FRA2. Mn(2+) is required as a cofactor.

The protein localises to the cytoplasm. It catalyses the reaction Release of any N-terminal amino acid, including proline, that is linked to proline, even from a dipeptide or tripeptide.. In terms of biological role, involved in the regulation of the iron regulon in responss to decreased mitochondrial iron-sulfur cluster synthesis. This Saccharomyces cerevisiae (strain ATCC 204508 / S288c) (Baker's yeast) protein is Putative Xaa-Pro aminopeptidase FRA1 (FRA1).